The primary structure comprises 297 residues: MFDYKLLSALAAVVEQAGFERAAQVLGLSQSAISQRIKLLEARVGQPVLVRGTPPSPTEIGRRLLNHVQQVRLLERDLQTLVPALDEEGLPERLRIALNADSLATWWAEAVGDFCAEQHLLLDLIVEDQTVGLKRMRAGEVAGCLCASERPVAGARSVLLGAMRYRALASPAFIKRHFPDGVRAEQLPRTPALVFGPDDFLQHRYLASLGVDGGFEHHLCPSSEGFIRLTEAGLGWGLVPELQVREQLERGVLRELLPDKPIDVPLYWHHWRNGGQLLGLLTEQLVRSSAQWLVPLD.

An HTH lysR-type domain is found at 2–58; that stretch reads FDYKLLSALAAVVEQAGFERAAQVLGLSQSAISQRIKLLEARVGQPVLVRGTPPSPT. Positions 19 to 38 form a DNA-binding region, H-T-H motif; that stretch reads FERAAQVLGLSQSAISQRIK.

This sequence belongs to the LysR transcriptional regulatory family. As to quaternary structure, homodimer.

Its function is as follows. Controls the transcription of genes involved in arginine and lysine metabolism. In Pseudomonas fluorescens (strain Pf0-1), this protein is HTH-type transcriptional regulator ArgP.